A 112-amino-acid chain; its full sequence is Small ribosomal subunit protein bS16 (112 aa).

It belongs to the bacterial ribosomal protein bS16 family.

This is Small ribosomal subunit protein bS16 from Karelsulcia muelleri (strain GWSS) (Sulcia muelleri).